The primary structure comprises 1224 residues: MIDVNKFESMQIGLASPNKIRSWSYGEVKKPETINYRTLKPEKDGLFDERIFGPTKDWSCACGKYKGIRYRGIVCDRCGVEVTSAKVRRERMGHIELAAPVSHIWYFKGIPSRMGLVLDISPRALEEVIYFAAYIVIDAGDTDLEDKQLLTEAEYREKKAKFGDRFEAKMGAEAVKELLEQVDIDKEVHELKEELKTATGQKRTRAIRRLDILDAFKNSGNKPSWMVMDCIPVIPPDLRPMVQLDGGRFATSDLNDLYRRVINRNNRLKRLLDLNAPRIIVQNEKRMLQEAVDALIDNGRRGRPVVGPGNRPLKSLSHMLKGKQGRLRQNLLGKRVDYSGRSVIDVSPELKFYQCGVPRPMALELFKPFVMHELVKRGLASNIKNAKRKIDREDDDIWDILEDVIKERPVLLNRAPTLHRLGIQAFEPVLVPGKSIRLHPLACEAYNADFDGDQMAIHVPLSDEAVAESRLLMLAAHHILAPKDGKPIVTPSQDIVLGNYWLTQAERGREGEGMIFDSPAEAAIAYANGDIHYHTRIGLAADSMPEKPWPKGYEHGIFVTTYGKLVFNQIFPKDFYYINDPTQENLTHPVDERYFLQPGEDIHEKLDNMKLGQAFKKGFLSDSIAQIYKDYKVQRTSDFLDDLKELGYTVCTTSGLTIGVEDIPTISDKDDIVAEARKKVDVVSKQYRRGLITDEERHDRVISIWNNCKDIVQNEIAQIIHAPRNPITIMADSGARGNISNFTQLAGMRGLMAAPNGGMMEIPVTSNFREGLSVLEMFMSTHGARKGMTDTALKTANSGYLTRRLVDVAQDVIIREEDCGTDRGLTVHAITEGDEMIEPLFDRLVGRYTSKSVYDPETHEVICPADVLMDEDMAHKIVDAGVTEVTIRSVFTCNTQHGVCKKCYGMNLATGDDVEVGEAVGTVAAQSIGEPGTQLTMRNFHNGGVAGAADITQGLPRVQELFEARNPKGRATISEVTGEVTSIEEDPAEHTRQITVKGQTDTRTYDVPYTASVAVAEGDHVVRGDKLTLGSIDPKELIRVRDALTTEKYILSEIQKAYRMQGVEIADKHVEVMARQMLQKVRILDPGETDILPGELMDIGEFKARNREVIISGGIPATAQSVILGITKAALETNSFLSAASFQETTRVLTDASIRGKNDPLLGLKENVIIGKIIPAGTGMPVYREMEPKVDVPEDEKKKSVYSIADIEKKLAAADAEKDNGSAD.

4 residues coordinate Zn(2+): C60, C62, C75, and C78. Mg(2+)-binding residues include D449, D451, and D453. Residues C819, C893, C900, and C903 each coordinate Zn(2+).

Belongs to the RNA polymerase beta' chain family. In terms of assembly, the RNAP catalytic core consists of 2 alpha, 1 beta, 1 beta' and 1 omega subunit. When a sigma factor is associated with the core the holoenzyme is formed, which can initiate transcription. Mg(2+) serves as cofactor. The cofactor is Zn(2+).

The enzyme catalyses RNA(n) + a ribonucleoside 5'-triphosphate = RNA(n+1) + diphosphate. DNA-dependent RNA polymerase catalyzes the transcription of DNA into RNA using the four ribonucleoside triphosphates as substrates. The chain is DNA-directed RNA polymerase subunit beta' from Lactobacillus johnsonii (strain CNCM I-12250 / La1 / NCC 533).